Consider the following 273-residue polypeptide: Large ribosomal subunit protein uL2 (273 aa).

Disordered regions lie at residues 28–55 (TPEK…RHRG) and 222–273 (GMAM…SKRK). A compositionally biased stretch (basic residues) spans 255-273 (YKTRKKRRVSDRFIVSKRK).

The protein belongs to the universal ribosomal protein uL2 family. As to quaternary structure, part of the 50S ribosomal subunit. Forms a bridge to the 30S subunit in the 70S ribosome.

In terms of biological role, one of the primary rRNA binding proteins. Required for association of the 30S and 50S subunits to form the 70S ribosome, for tRNA binding and peptide bond formation. It has been suggested to have peptidyltransferase activity; this is somewhat controversial. Makes several contacts with the 16S rRNA in the 70S ribosome. The sequence is that of Large ribosomal subunit protein uL2 from Treponema pallidum (strain Nichols).